The chain runs to 285 residues: UstYa family oxidase phomYe (285 aa).

A helical transmembrane segment spans residues 32–54; sequence LFYGWKGIAFLSTLTNVLFISGF. The tract at residues 143-165 is disordered; that stretch reads YGFGTPLTGPGSEGNEHDPTPWT. Residues 177–181 carry the HXXHC 1 motif; it reads HQLHC. N-linked (GlcNAc...) asparagine glycosylation is present at asparagine 202. The HXXHC 2 motif lies at 209–213; sequence HVDHC.

It belongs to the ustYa family.

The protein resides in the membrane. Its pathway is mycotoxin biosynthesis. Its function is as follows. UstYa family oxidase; part of the gene cluster that mediates the biosynthesis of the phomopsins, a group of hexapeptide mycotoxins which infects lupins and causes lupinosis disease in livestock. Within the pathway, phomYe catalyzes the desaturation of the Pro moiety into 3,4-dehydroproline (dPro). The pathway starts with the processing of the precursor phomA by several endopeptidases including kexin proteases as well as the cluster-specific S41 family peptidase phomP1 and the oligopeptidase phomG to produce 10 identical copies of the hexapeptide Tyr-Val-Ile-Pro-Ile-Asp. After being excised from the precursor peptide, the core peptides are cyclized and modified post-translationally by enzymes encoded within the gene cluster. The timing and order of proteolysis of the phomA precursor and PTMs are still unknown. Two tyrosinase-like enzymes, phomQ1 and phomQ2, catalyze the chlorination and hydroxylation of Tyr, respectively. PhomYb, is proposed to be involved in the construction of the macrocyclic structure. The other 4 ustYa family proteins may be involved in PTMs that generate the unique structure of phomopsin A. PhomYa is required for the hydroxylation of C-beta of Tyr. PhomYc, phomYd, and phomYe are responsible for the biosynthesis of 2,3-dehydroisoleucine (dIle), 2,3-dehydroaspartic acid (dAsp), and 3,4-dehydroproline (dPro), respectively. While dIle formation by phomYc is indispensable for the installation of dAsp by phomYd, the order of the other PTMs have not been elucidated yet. Most of the biosynthetic enzymes likely have broad substrate specificity, and thus, there might be a metabolic grid from a precursor to phomopsin A. The enzyme(s) responsible for the biosynthesis of 3,4-dehydrovaline (dVal) have also not been identified yet. Finally, phomM acts as an S-adenosylmethionine-dependent alpha-N-methyltransferase that catalyzes two successive N-methylation reactions, converting N-desmethyl-phomopsin A to phomopsin A and phomopsin A further to an N,N-dimethylated congener called phomopsin E. The chain is UstYa family oxidase phomYe from Diaporthe leptostromiformis (Lupinosis disease fungus).